The primary structure comprises 251 residues: Ubiquitin-conjugating enzyme E2 22 (251 aa).

Residues 10–156 (NVIKQLAKEL…ARLYTGIHAK (147 aa)) form the UBC core domain. Cysteine 94 (glycyl thioester intermediate) is an active-site residue. A compositionally biased stretch (basic and acidic residues) spans 230-240 (GLAKVQADKKK). A disordered region spans residues 230–251 (GLAKVQADKKKVDARKKSLKRL). Residues 230–251 (GLAKVQADKKKVDARKKSLKRL) adopt a coiled-coil conformation. Over residues 241–251 (VDARKKSLKRL) the composition is skewed to basic residues.

It belongs to the ubiquitin-conjugating enzyme family. Post-translationally, self-ubiquitinated. Expressed in seeds, pistils, siliques, hypocotyls and leaves.

It carries out the reaction S-ubiquitinyl-[E1 ubiquitin-activating enzyme]-L-cysteine + [E2 ubiquitin-conjugating enzyme]-L-cysteine = [E1 ubiquitin-activating enzyme]-L-cysteine + S-ubiquitinyl-[E2 ubiquitin-conjugating enzyme]-L-cysteine.. It functions in the pathway protein modification; protein ubiquitination. In terms of biological role, accepts the ubiquitin from the E1 complex and catalyzes its covalent attachment to other proteins. This Arabidopsis thaliana (Mouse-ear cress) protein is Ubiquitin-conjugating enzyme E2 22 (UBC22).